Here is a 465-residue protein sequence, read N- to C-terminus: Cysteine--tRNA ligase (465 aa).

Cys-30 is a binding site for Zn(2+). The short motif at 32–42 (ITVYDYCHVGH) is the 'HIGH' region element. The Zn(2+) site is built by Cys-214, His-239, and Glu-243. A 'KMSKS' region motif is present at residues 271-275 (KMSKS). ATP is bound at residue Lys-274.

It belongs to the class-I aminoacyl-tRNA synthetase family. In terms of assembly, monomer. Zn(2+) is required as a cofactor.

The protein resides in the cytoplasm. It carries out the reaction tRNA(Cys) + L-cysteine + ATP = L-cysteinyl-tRNA(Cys) + AMP + diphosphate. This is Cysteine--tRNA ligase from Burkholderia orbicola (strain MC0-3).